A 176-amino-acid polypeptide reads, in one-letter code: Cathelicidin-2 (176 aa).

Positions 1-29 (METQRASLSLGRCSLWLLLLGLVLPSASA) are cleaved as a signal peptide. Residue glutamine 30 is modified to Pyrrolidone carboxylic acid. Positions 30–130 (QALSYREAVL…DINCNELQSV (101 aa)) are excised as a propeptide. Cystine bridges form between cysteine 85–cysteine 96 and cysteine 107–cysteine 124. The disordered stretch occupies residues 157-176 (IFPPIRPPFRPPLGPFPGRR). The residue at position 173 (proline 173) is a Proline amide. The propeptide at 174 to 176 (GRR) is removed in mature form.

The protein belongs to the cathelicidin family. Elastase is responsible for its maturation. In terms of tissue distribution, large granules of neutrophils.

It is found in the secreted. In terms of biological role, exerts, in vitro, a potent antimicrobial activity. Probably due to an impairment of the function of the respiratory chain and of energy-dependent activities in the inner membrane of susceptible microorganisms. This chain is Cathelicidin-2 (CATHL2), found in Bos taurus (Bovine).